Reading from the N-terminus, the 193-residue chain is Potassium-transporting ATPase KdpC subunit (193 aa).

A helical transmembrane segment spans residues 7 to 27 (PLVVLFVILTAVTGLAYPAVM).

The protein belongs to the KdpC family. In terms of assembly, the system is composed of three essential subunits: KdpA, KdpB and KdpC.

The protein resides in the cell inner membrane. Functionally, part of the high-affinity ATP-driven potassium transport (or Kdp) system, which catalyzes the hydrolysis of ATP coupled with the electrogenic transport of potassium into the cytoplasm. This subunit acts as a catalytic chaperone that increases the ATP-binding affinity of the ATP-hydrolyzing subunit KdpB by the formation of a transient KdpB/KdpC/ATP ternary complex. The protein is Potassium-transporting ATPase KdpC subunit of Burkholderia cenocepacia (strain ATCC BAA-245 / DSM 16553 / LMG 16656 / NCTC 13227 / J2315 / CF5610) (Burkholderia cepacia (strain J2315)).